Consider the following 338-residue polypeptide: Phosphonates-binding periplasmic protein (338 aa).

The first 26 residues, methionine 1–alanine 26, serve as a signal peptide directing secretion.

It belongs to the phosphate/phosphite/phosphonate binding protein family. The complex is composed of two ATP-binding proteins (PhnC), two transmembrane proteins (PhnE) and a solute-binding protein (PhnD).

It is found in the periplasm. Functionally, phosphonate binding protein that is part of the phosphonate uptake system. Exhibits high affinity for 2-aminoethylphosphonate, and somewhat less affinity to ethylphosphonate, methylphosphonate, phosphonoacetate and phenylphosphonate. The polypeptide is Phosphonates-binding periplasmic protein (phnD) (Escherichia coli (strain K12)).